Here is a 230-residue protein sequence, read N- to C-terminus: PKHD-type hydroxylase XF_0598 (230 aa).

Residues 78–182 (RTLPPRFNCY…RIASFFWVQS (105 aa)) enclose the Fe2OG dioxygenase domain. 3 residues coordinate Fe cation: histidine 96, aspartate 98, and histidine 163. Residue arginine 173 participates in 2-oxoglutarate binding.

Fe(2+) is required as a cofactor. Requires L-ascorbate as cofactor.

This chain is PKHD-type hydroxylase XF_0598, found in Xylella fastidiosa (strain 9a5c).